The sequence spans 683 residues: E3 ubiquitin-protein ligase RNF103 (683 aa).

A run of 4 helical transmembrane segments spans residues 6 to 26 (FFLLLYFLVLFVLARFFEAIV), 326 to 346 (LFVLSLVLVNLMAWMDLFITQ), 366 to 386 (LLIISWLPVLGFLQLPYLDSF), and 411 to 431 (MFYTSHPALFLSTYLGHGLLI). Positions 525 to 542 (EEMSESSQDTENDSDSDN) are enriched in acidic residues. Residues 525 to 548 (EEMSESSQDTENDSDSDNMDTFSS) are disordered. The segment at 619–661 (CVVCLENFENGCLLMGLPCGHVFHQNCIVMWLAGGRHCCPVCR) adopts an RING-type zinc-finger fold.

As to quaternary structure, interacts with DERL1 and VCP. As to expression, highly expressed in the normal cerebellum but not in the cerebral cortex.

Its subcellular location is the endoplasmic reticulum membrane. The catalysed reaction is S-ubiquitinyl-[E2 ubiquitin-conjugating enzyme]-L-cysteine + [acceptor protein]-L-lysine = [E2 ubiquitin-conjugating enzyme]-L-cysteine + N(6)-ubiquitinyl-[acceptor protein]-L-lysine.. It functions in the pathway protein modification; protein ubiquitination. In terms of biological role, acts as an E2-dependent E3 ubiquitin-protein ligase, probably involved in the ER-associated protein degradation pathway. This is E3 ubiquitin-protein ligase RNF103 (Rnf103) from Mus musculus (Mouse).